The primary structure comprises 220 residues: Uracil-DNA glycosylase (220 aa).

D65 serves as the catalytic Proton acceptor.

Belongs to the uracil-DNA glycosylase (UDG) superfamily. UNG family.

It is found in the cytoplasm. The catalysed reaction is Hydrolyzes single-stranded DNA or mismatched double-stranded DNA and polynucleotides, releasing free uracil.. In terms of biological role, excises uracil residues from the DNA which can arise as a result of misincorporation of dUMP residues by DNA polymerase or due to deamination of cytosine. The chain is Uracil-DNA glycosylase from Leuconostoc mesenteroides subsp. mesenteroides (strain ATCC 8293 / DSM 20343 / BCRC 11652 / CCM 1803 / JCM 6124 / NCDO 523 / NBRC 100496 / NCIMB 8023 / NCTC 12954 / NRRL B-1118 / 37Y).